Reading from the N-terminus, the 60-residue chain is Small ribosomal subunit protein eS17 (60 aa).

The protein belongs to the eukaryotic ribosomal protein eS17 family.

This chain is Small ribosomal subunit protein eS17, found in Methanosphaera stadtmanae (strain ATCC 43021 / DSM 3091 / JCM 11832 / MCB-3).